We begin with the raw amino-acid sequence, 79 residues long: Conotoxin ArMSGL-0123 (79 aa).

The signal sequence occupies residues 1 to 20 (MSRLGIMVLTLLLLVFIVTS). Residues 21–44 (HQDAGEKQATKRAAVNFRWRRSFT) constitute a propeptide that is removed on maturation. 3 cysteine pairs are disulfide-bonded: Cys-52-Cys-64, Cys-56-Cys-73, and Cys-63-Cys-77. A Leucine amide modification is found at Leu-78.

Belongs to the conotoxin O3 superfamily. As to expression, expressed by the venom duct.

The protein localises to the secreted. This chain is Conotoxin ArMSGL-0123, found in Conus arenatus (Sand-dusted cone).